The following is a 767-amino-acid chain: Pre-mRNA-splicing factor ATP-dependent RNA helicase PRP43 (767 aa).

The interval 1 to 74 (MGSKRRFSSE…KLEDGKINPF (74 aa)) is disordered. A phosphoserine mark is found at S8 and S9. The span at 58–70 (TSAEEAQKLEDGK) shows a compositional bias: basic and acidic residues. The Helicase ATP-binding domain maps to 103–268 (LKLYQNNQIM…FNDAPLLAVP (166 aa)). ATP is bound at residue 116-123 (GETGSGKT). Positions 215-218 (DEAH) match the DEAH box motif. Residues 293–473 (TVLQIHATEE…STVLELKKLG (181 aa)) enclose the Helicase C-terminal domain.

It belongs to the DEAD box helicase family. DEAH subfamily. DDX15/PRP43 sub-subfamily. In terms of assembly, component of the NTR complex (NTC-related complex), composed of NTR1, NTR2 and PRP43. Interacts with NTR1 and NTR2. Interacts with SPP382.

It is found in the nucleus. The enzyme catalyses ATP + H2O = ADP + phosphate + H(+). Its function is as follows. Pre-mRNA processing factor involved in disassembly of spliceosomes after the release of mature mRNA. The polypeptide is Pre-mRNA-splicing factor ATP-dependent RNA helicase PRP43 (PRP43) (Saccharomyces cerevisiae (strain ATCC 204508 / S288c) (Baker's yeast)).